The primary structure comprises 705 residues: MTIEDLPDFPLEGNPLFGRYPFIFSASDTPVIFSISAAPMPSDCEFSFFDPNDASCQEILFDPKTSVSELFAILRQWVPQVQQNIDIIGNEILKRGCNVNDRDGLTDMTLLHYTCKSGAHGIGDVETAVKFATQLIDLGADISLRSRWTNMNALHYAAYFDVPELIRVILKTSKPKDVDATCSDFNFGTALHIAAYNLCAGAVKCLLEQGANPAFRNDKGQIPADVVPDPVDMPLEMADAAATAKEIKQMLLDAVPLSCNISKAMLPNYDHVTGKAMLTSLGLKLGDRVVIAGQKVGTLRFCGTTEFASGQWAGIELDEPEGKNNGSVGKVQYFKCAPKYGIFAPLSKISKAKGRRKNITHTPSTKAAVPLIRSQKIDVAHVTSKVNTGLMTSKKDSASESTLSLPPGEELKTVTEKDVALLGSVSSCSSTSSLEHRQSYPKKQNAISSNKKTMSKSPSLSSRASAGLNSSATSTANNSRCEGELRLGERVLVVGQRLGTIRFFGTTNFAPGYWYGIELEKPHGKNDGSVGGVQYFSCSPRYGIFAPPSRVQRVTDSLDTLSEISSNKQNHSYPGFRRSFSTTSASSQKEINRRNAFSKSKAALRRSWSSTPTAGGIEGSVKLHEGSQVLLTSSNEMGTVRYVGPTDFASGIWLGLELRSAKGKNDGSVGDKRYFTCKPNHGVLVRPSRVTYRGINGSKLVDENC.

3 ANK repeats span residues 65–101 (TSVSELFAILRQWVPQVQQNIDIIGNEILKRGCNVND), 149–180 (TNMNALHYAAYFDVPELIRVILKTSKPKDVDA), and 186–215 (NFGTALHIAAYNLCAGAVKCLLEQGANPAF). The region spanning 303-345 (GTTEFASGQWAGIELDEPEGKNNGSVGKVQYFKCAPKYGIFAP) is the CAP-Gly 1 domain. Disordered regions lie at residues 391 to 410 (MTSKKDSASESTLSLPPGEE) and 431 to 479 (TSSL…ANNS). Polar residues predominate over residues 441 to 452 (PKKQNAISSNKK). The segment covering 455–479 (SKSPSLSSRASAGLNSSATSTANNS) has biased composition (low complexity). The CAP-Gly 2 domain maps to 505 to 547 (GTTNFAPGYWYGIELEKPHGKNDGSVGGVQYFSCSPRYGIFAP). Phosphoserine occurs at positions 557 and 609. The CAP-Gly 3 domain occupies 644–686 (GPTDFASGIWLGLELRSAKGKNDGSVGDKRYFTCKPNHGVLVR).

This is CAP-Gly domain-containing linker protein 4 (CLIP4) from Homo sapiens (Human).